A 727-amino-acid polypeptide reads, in one-letter code: MTVSESSVLDTEVLVGGSAMPNERPGPMEPQSLSQMPEGFPRRSTVANGVRSRASRRFFVVGGALLLSSFAIYEMGAVFSIGGITPLEYLMLALFAINFCWIALAFCSGIAGFLLLLKKPKPNELAQTELHTRTAILMPTYNESPDRVFSAVSVMAEALSQTGHGHAFDWFILSDTTDPEIALLEEQAFLVLRQETHKHSRVYYRRRRKNVARKAGNVADFCRRWGSRYDHLLVLDADSLMESSTITGLAQRMQADPDAGLIQTIPSLINGTTLMARLQQFAARIYGPVIGTGLGWWVQKEGNFWGHNAIIRTEAFMGAAGLPNLKGKPPFGGHILSHDFVEAALIRRAGWSVVIAYDLPGSYEECPPSIVDLAVRDRRWCQGNLQHSRILPTKGLHWVSRLHLMTGIMAYLSSPFWLLLILTGLMLALQAHFIRPEYFTDQFSLFPTWPIMDSDRALRLFYITMVVLFGPKIFGVLLLLKDGKFARSVGGRIKAMFSVLFEVILSALIAPIMMFIHCGAVMSILMGRDSGWSPQRRDDGSMPWLTLIYRHRWHMLAGVMLGYAAILDSLTLLAWMSPALIGLWLAVPISAWTGSIKIGEFFKRIGILATPEERNPAPICIRAQEARAAYQSHIEQPWTLAQLLKDPALMELHLAMVDKQPLRAAGTPIEPVEAIVHVKVHEAQCQQSALALFNRQEMALVLANPLMLRSLQKLPEQFVPEDLVSFC.

Positions 17 to 41 (GSAMPNERPGPMEPQSLSQMPEGFP) are disordered. Transmembrane regions (helical) follow at residues 58–80 (FFVV…AVFS), 95–117 (FAIN…LLLL), 407–429 (GIMA…MLAL), 457–479 (ALRL…VLLL), 499–521 (VLFE…CGAV), and 572–594 (LLAW…AWTG).

The protein belongs to the glycosyltransferase 2 family. OpgH subfamily.

The protein localises to the cell inner membrane. The protein operates within glycan metabolism; osmoregulated periplasmic glucan (OPG) biosynthesis. Involved in the biosynthesis of osmoregulated periplasmic glucans (OPGs). This chain is Glucans biosynthesis glucosyltransferase H, found in Shewanella oneidensis (strain ATCC 700550 / JCM 31522 / CIP 106686 / LMG 19005 / NCIMB 14063 / MR-1).